We begin with the raw amino-acid sequence, 406 residues long: Cysteine desulfurase (406 aa).

K226 is modified (N6-(pyridoxal phosphate)lysine). The Cysteine persulfide intermediate role is filled by C364.

It belongs to the class-V pyridoxal-phosphate-dependent aminotransferase family. Csd subfamily. In terms of assembly, homodimer. Interacts with SufE and the SufBCD complex composed of SufB, SufC and SufD. The interaction with SufE is required to mediate the direct transfer of the sulfur atom from the S-sulfanylcysteine. Requires pyridoxal 5'-phosphate as cofactor.

The protein localises to the cytoplasm. The enzyme catalyses (sulfur carrier)-H + L-cysteine = (sulfur carrier)-SH + L-alanine. It catalyses the reaction L-selenocysteine + AH2 = hydrogenselenide + L-alanine + A + H(+). It participates in cofactor biosynthesis; iron-sulfur cluster biosynthesis. In terms of biological role, cysteine desulfurases mobilize the sulfur from L-cysteine to yield L-alanine, an essential step in sulfur metabolism for biosynthesis of a variety of sulfur-containing biomolecules. Component of the suf operon, which is activated and required under specific conditions such as oxidative stress and iron limitation. Acts as a potent selenocysteine lyase in vitro, that mobilizes selenium from L-selenocysteine. Selenocysteine lyase activity is however unsure in vivo. The chain is Cysteine desulfurase from Salmonella agona (strain SL483).